A 474-amino-acid chain; its full sequence is Adenosylhomocysteinase (474 aa).

Residues Thr-61, Asp-136, and Glu-196 each coordinate substrate. Residue 197-199 participates in NAD(+) binding; that stretch reads TTT. Substrate-binding residues include Lys-226 and Asp-230. NAD(+) is bound by residues Asn-231, 260-265, Glu-283, Asn-318, 339-341, and Asn-384; these read GYGDVG and IGH.

The protein belongs to the adenosylhomocysteinase family. Requires NAD(+) as cofactor.

It localises to the cytoplasm. It catalyses the reaction S-adenosyl-L-homocysteine + H2O = L-homocysteine + adenosine. The protein operates within amino-acid biosynthesis; L-homocysteine biosynthesis; L-homocysteine from S-adenosyl-L-homocysteine: step 1/1. Functionally, may play a key role in the regulation of the intracellular concentration of adenosylhomocysteine. This Ralstonia nicotianae (strain ATCC BAA-1114 / GMI1000) (Ralstonia solanacearum) protein is Adenosylhomocysteinase.